We begin with the raw amino-acid sequence, 216 residues long: DNA gyrase subunit B (216 aa).

The 77-residue stretch at 140-216 (SELYLVEGDS…PDKLRYHKII (77 aa)) folds into the Toprim domain.

The protein belongs to the type II topoisomerase GyrB family. As to quaternary structure, heterotetramer, composed of two GyrA and two GyrB chains. In the heterotetramer, GyrA contains the active site tyrosine that forms a transient covalent intermediate with DNA, while GyrB binds cofactors and catalyzes ATP hydrolysis.

It is found in the cytoplasm. It catalyses the reaction ATP-dependent breakage, passage and rejoining of double-stranded DNA.. In terms of biological role, a type II topoisomerase that negatively supercoils closed circular double-stranded (ds) DNA in an ATP-dependent manner to modulate DNA topology and maintain chromosomes in an underwound state. Negative supercoiling favors strand separation, and DNA replication, transcription, recombination and repair, all of which involve strand separation. Also able to catalyze the interconversion of other topological isomers of dsDNA rings, including catenanes and knotted rings. Type II topoisomerases break and join 2 DNA strands simultaneously in an ATP-dependent manner. The chain is DNA gyrase subunit B (gyrB) from Acinetobacter sp. (strain ATCC 33308 / BD413 ErpE27).